Consider the following 240-residue polypeptide: Ribitol-5-phosphate cytidylyltransferase (240 aa).

Residues 8-11 (FAGG) and 81-87 (GETGQMS) each bind CTP.

The protein belongs to the IspD/TarI cytidylyltransferase family. TarI subfamily.

It catalyses the reaction D-ribitol 5-phosphate + CTP + H(+) = CDP-L-ribitol + diphosphate. It functions in the pathway cell wall biogenesis; poly(ribitol phosphate) teichoic acid biosynthesis. Functionally, catalyzes the transfer of the cytidylyl group of CTP to D-ribitol 5-phosphate. The polypeptide is Ribitol-5-phosphate cytidylyltransferase (Streptococcus agalactiae serotype V (strain ATCC BAA-611 / 2603 V/R)).